We begin with the raw amino-acid sequence, 381 residues long: Homoserine O-succinyltransferase (381 aa).

Residues 45–360 (NAVLVCHALN…PHGHDAFLLD (316 aa)) enclose the AB hydrolase-1 domain. Ser151 (nucleophile) is an active-site residue. Residue Arg221 coordinates substrate. Residues Asp321 and His354 contribute to the active site. Substrate is bound at residue Asp355.

Belongs to the AB hydrolase superfamily. MetX family. As to quaternary structure, homodimer.

The protein resides in the cytoplasm. It catalyses the reaction L-homoserine + succinyl-CoA = O-succinyl-L-homoserine + CoA. It functions in the pathway amino-acid biosynthesis; L-methionine biosynthesis via de novo pathway; O-succinyl-L-homoserine from L-homoserine: step 1/1. In terms of biological role, transfers a succinyl group from succinyl-CoA to L-homoserine, forming succinyl-L-homoserine. In Burkholderia mallei (strain NCTC 10247), this protein is Homoserine O-succinyltransferase.